The chain runs to 151 residues: Sec-independent protein translocase protein TatB (151 aa).

A helical transmembrane segment spans residues 1-21; the sequence is MFGMSLPEIIIIAVIAVIFLG. Over residues 120-131 the composition is skewed to low complexity; the sequence is NNDPLNNETLNE. The tract at residues 120-151 is disordered; the sequence is NNDPLNNETLNEQPSKPSPNLNLENKEIKKEA. Positions 132 to 142 are enriched in polar residues; it reads QPSKPSPNLNL.

This sequence belongs to the TatB family. In terms of assembly, the Tat system comprises two distinct complexes: a TatABC complex, containing multiple copies of TatA, TatB and TatC subunits, and a separate TatA complex, containing only TatA subunits. Substrates initially bind to the TatABC complex, which probably triggers association of the separate TatA complex to form the active translocon.

It localises to the cell inner membrane. In terms of biological role, part of the twin-arginine translocation (Tat) system that transports large folded proteins containing a characteristic twin-arginine motif in their signal peptide across membranes. Together with TatC, TatB is part of a receptor directly interacting with Tat signal peptides. TatB may form an oligomeric binding site that transiently accommodates folded Tat precursor proteins before their translocation. This chain is Sec-independent protein translocase protein TatB, found in Campylobacter fetus subsp. fetus (strain 82-40).